Here is a 395-residue protein sequence, read N- to C-terminus: MAKETYVRTKPHVNIGTIGHVDHGKTTLTAAISKVLAEKQGITATDFAEIDNAPEEKERGITINTSHIEYETETRHYAHIDAPGHADYVKNMITGAAQMDGAILVVAATDGPMPQTREHILLARQVGVEYLVVFLNKTDLVDDEELVELVEMEVRELLSEYDFPGDDIPVIKGSALKALEGDPEQVKVIEELMDTVDSYIPEPKRETDKPFLMPVEDVFTITGRGTVASGRVDRGVLTTGTEIEIVGLKDEIKKTTVTGIEMFRKTLDEAQAGDNIGALLRGVDRNEIERGQVLAKPGSIKTHKKFKAEVYVLSKEEGGRHTPFFTNYRPQFYFHTTDVTGVVELPAGVEMVMPGDQVTFEIELISPVAIEQGLKFTVREGGHTVGAGTVTEIED.

One can recognise a tr-type G domain in the interval K10–K204. Residues G19 to T26 form a G1 region. Residue G19–T26 coordinates GTP. T26 contributes to the Mg(2+) binding site. Residues G60 to N64 are G2. Residues D81–G84 are G3. Residues D81–H85 and N136–D139 contribute to the GTP site. The tract at residues N136–D139 is G4. Positions S174–L176 are G5.

This sequence belongs to the TRAFAC class translation factor GTPase superfamily. Classic translation factor GTPase family. EF-Tu/EF-1A subfamily. As to quaternary structure, monomer.

Its subcellular location is the cytoplasm. It catalyses the reaction GTP + H2O = GDP + phosphate + H(+). GTP hydrolase that promotes the GTP-dependent binding of aminoacyl-tRNA to the A-site of ribosomes during protein biosynthesis. The polypeptide is Elongation factor Tu (Leuconostoc citreum (strain KM20)).